Reading from the N-terminus, the 674-residue chain is tRNA wybutosine-synthesizing protein 4 (674 aa).

S-adenosyl-L-methionine-binding positions include arginine 84, glycine 109, aspartate 140, 184–185, and glutamate 212; that span reads DL.

The protein belongs to the methyltransferase superfamily. LCMT family.

The enzyme catalyses 7-[(3S)-3-amino-3-carboxypropyl]wyosine(37) in tRNA(Phe) + S-adenosyl-L-methionine = 7-[(3S)-(3-amino-3-methoxycarbonyl)propyl]wyosine(37) in tRNA(Phe) + S-adenosyl-L-homocysteine. It catalyses the reaction 7-[(3S)-(3-amino-3-methoxycarbonyl)propyl]wyosine(37) in tRNA(Phe) + S-adenosyl-L-methionine + CO2 = wybutosine(37) in tRNA(Phe) + S-adenosyl-L-homocysteine + 2 H(+). It functions in the pathway tRNA modification; wybutosine-tRNA(Phe) biosynthesis. Its function is as follows. Probable S-adenosyl-L-methionine-dependent methyltransferase that acts as a component of the wybutosine biosynthesis pathway. Wybutosine is a hyper modified guanosine with a tricyclic base found at the 3'-position adjacent to the anticodon of eukaryotic phenylalanine tRNA. May methylate the carboxyl group of leucine residues to form alpha-leucine ester residues. The polypeptide is tRNA wybutosine-synthesizing protein 4 (PPM2) (Candida glabrata (strain ATCC 2001 / BCRC 20586 / JCM 3761 / NBRC 0622 / NRRL Y-65 / CBS 138) (Yeast)).